The sequence spans 488 residues: MQQTRTEAVAGAFSRCLGFCGMRLGLLLLARHWCIAGVFPQKFDGDSAYVGMSDGNPELLSTSQTYNGQSENNEDYEIPPITPPNLPEPSLLHLGDHEASYHSLCHGLTPNGLLPAYSYQAMDLPAIMVSNMLAQDSHLLSGQLPTIQEMVHSEVAAYDSGRPGPLLGRPAMLASHMSALSQSQLISQMGIRSSIAHSSPSPPGSKSATPSPSSSTQEEESEVHFKISGEKRPSADPGKKAKNPKKKKKKDPNEPQKPVSAYALFFRDTQAAIKGQNPSATFGDVSKIVASMWDSLGEEQKQSSPDQGETKSTQANPPAKMLPPKQPMYAMPGLASFLTPSDLQAFRSGASPASLARTLGSKSLLPGLSASPPPPPSFPLSPTLHQQLSLPPHAQGALLSPPVSMSPAPQPPVLPTPMALQVQLAMSPSPPGPQDFPHISEFPSSSGSCSPGPSNPTSSGDWDSSYPSGECGISTCSLLPRDKSLYLT.

Residues 76–114 (YEIPPITPPNLPEPSLLHLGDHEASYHSLCHGLTPNGLL) are required for transcriptional activation. 3 disordered regions span residues 192–258 (RSSI…PQKP), 293–328 (WDSL…KQPM), and 363–473 (SLLP…ECGI). Low complexity predominate over residues 204-216 (GSKSATPSPSSST). Residues 222-239 (EVHFKISGEKRPSADPGK) are compositionally biased toward basic and acidic residues. Residues 223-252 (VHFKISGEKRPSADPGKKAKNPKKKKKKDP) carry the Nuclear localization signal motif. Positions 240 to 250 (KAKNPKKKKKK) are enriched in basic residues. Residues 255-323 (PQKPVSAYAL…QANPPAKMLP (69 aa)) constitute a DNA-binding region (HMG box). The span at 302 to 316 (QSSPDQGETKSTQAN) shows a compositional bias: polar residues. Residues 443 to 460 (PSSSGSCSPGPSNPTSSG) show a composition bias toward low complexity.

The protein resides in the nucleus. Its function is as follows. Putative transcriptional activator involved in the hypothalamo-pituitary-gonadal system. The protein is TOX high mobility group box family member 2 (TOX2) of Homo sapiens (Human).